The primary structure comprises 373 residues: MSDNSKTRVVVGMSGGVDSSVTALLLKEQGYDVIGIFMKNWDDTDENGVCTATEDYKDVVAVADQIGIPYYSVNFEKEYWDRVFEYFLAEYRAGRTPNPDVMCNKEIKFKAFLDYAMTLGADYVATGHYARVARDEDGTVHMLRGVDNGKDQTYFLSQLSQEQLQKTMFPLGHLEKPEVRKLAEEAGLSTAKKKDSTGICFIGEKNFKNFLSNYLPAQPGRMMTVDGRDMGEHAGLMYYTIGQRGGLGIGGQHGGDNAPWFVVGKDLSKNILYVGQGFYHDSLMSTSLEASQVHFTREMPEEFTLECTAKFRYRQPDSKVTVHVKGDKAEVIFAEPQRAITPGQAVVFYDGEECLGGGLIDNAYRDGQVCQYI.

ATP contacts are provided by residues 12–19 (GMSGGVDS) and Met-38. Positions 98-100 (NPD) are interaction with target base in tRNA. Residue Cys-103 is the Nucleophile of the active site. A disulfide bridge connects residues Cys-103 and Cys-200. Gly-127 provides a ligand contact to ATP. Residues 150-152 (KDQ) are interaction with tRNA. Cys-200 acts as the Cysteine persulfide intermediate in catalysis. The segment at 312–313 (RY) is interaction with tRNA.

The protein belongs to the MnmA/TRMU family.

Its subcellular location is the cytoplasm. It catalyses the reaction S-sulfanyl-L-cysteinyl-[protein] + uridine(34) in tRNA + AH2 + ATP = 2-thiouridine(34) in tRNA + L-cysteinyl-[protein] + A + AMP + diphosphate + H(+). In terms of biological role, catalyzes the 2-thiolation of uridine at the wobble position (U34) of tRNA, leading to the formation of s(2)U34. This Streptococcus pneumoniae (strain P1031) protein is tRNA-specific 2-thiouridylase MnmA.